A 216-amino-acid polypeptide reads, in one-letter code: UPF0598 protein C8orf82 (216 aa).

It belongs to the UPF0598 family.

The polypeptide is UPF0598 protein C8orf82 (C8orf82) (Homo sapiens (Human)).